A 348-amino-acid polypeptide reads, in one-letter code: Alcohol dehydrogenase 2 (348 aa).

Serine 2 carries the N-acetylserine modification. Cysteine 44 is a Zn(2+) binding site. NAD(+) is bound by residues histidine 45, threonine 46, and histidine 49. Zn(2+)-binding residues include histidine 67, glutamate 68, cysteine 98, cysteine 101, cysteine 104, cysteine 112, and cysteine 154. The NAD(+) site is built by glycine 181, glycine 182, leucine 183, aspartate 202, and lysine 207. A Phosphoserine modification is found at serine 213. Residue phenylalanine 222 coordinates NAD(+). At threonine 223 the chain carries Phosphothreonine. Residues lysine 226 and lysine 234 each participate in a glycyl lysine isopeptide (Lys-Gly) (interchain with G-Cter in ubiquitin) cross-link. Valine 269 is a binding site for NAD(+). At serine 279 the chain carries Phosphoserine. Residue lysine 287 forms a Glycyl lysine isopeptide (Lys-Gly) (interchain with G-Cter in ubiquitin) linkage. Residues serine 294 and valine 296 each coordinate NAD(+). Residue serine 316 is modified to Phosphoserine. Lysine 319 participates in a covalent cross-link: Glycyl lysine isopeptide (Lys-Gly) (interchain with G-Cter in ubiquitin). Position 341 (arginine 341) interacts with NAD(+).

This sequence belongs to the zinc-containing alcohol dehydrogenase family. As to quaternary structure, homotetramer. Requires Zn(2+) as cofactor.

It is found in the cytoplasm. It catalyses the reaction a primary alcohol + NAD(+) = an aldehyde + NADH + H(+). The catalysed reaction is a secondary alcohol + NAD(+) = a ketone + NADH + H(+). The enzyme catalyses ethanol + NAD(+) = acetaldehyde + NADH + H(+). It carries out the reaction butan-1-ol + NAD(+) = butanal + NADH + H(+). It catalyses the reaction hexan-1-ol + NAD(+) = hexanal + NADH + H(+). In terms of biological role, preferentially oxidative, glucose-repressed isozyme that catalyzes the conversion of ethanol to acetaldehyde. Main enzyme involved in ethanol consumption. Acts on a variety of primary unbranched aliphatic alcohols. Also produces ethanol from glucose, albeit less than ADH1. This chain is Alcohol dehydrogenase 2 (ADH2), found in Saccharomyces cerevisiae (strain ATCC 204508 / S288c) (Baker's yeast).